The following is a 142-amino-acid chain: Large ribosomal subunit protein uL13 (142 aa).

The protein belongs to the universal ribosomal protein uL13 family. As to quaternary structure, part of the 50S ribosomal subunit.

Its function is as follows. This protein is one of the early assembly proteins of the 50S ribosomal subunit, although it is not seen to bind rRNA by itself. It is important during the early stages of 50S assembly. This is Large ribosomal subunit protein uL13 from Nitrosococcus oceani (strain ATCC 19707 / BCRC 17464 / JCM 30415 / NCIMB 11848 / C-107).